Consider the following 137-residue polypeptide: Large ribosomal subunit protein uL16 (137 aa).

Residues 1–19 (MLSPKKVKFRKQQRGRRTG) are compositionally biased toward basic residues. The tract at residues 1–20 (MLSPKKVKFRKQQRGRRTGT) is disordered.

The protein belongs to the universal ribosomal protein uL16 family. In terms of assembly, part of the 50S ribosomal subunit.

Its function is as follows. Binds 23S rRNA and is also seen to make contacts with the A and possibly P site tRNAs. This Desulfosudis oleivorans (strain DSM 6200 / JCM 39069 / Hxd3) (Desulfococcus oleovorans) protein is Large ribosomal subunit protein uL16.